The primary structure comprises 547 residues: Probable bifunctional tRNA threonylcarbamoyladenosine biosynthesis protein (547 aa).

The segment at 1-329 (MDTSKDLICI…YRSDMVEVNW (329 aa)) is kae1. 3 residues coordinate Fe cation: His112, His116, and Tyr133. L-threonylcarbamoyladenylate-binding positions include 133–137 (YVSGG), Asp165, Gly178, Glu182, and Asn262. Asp290 contributes to the Fe cation binding site. A Protein kinase domain is found at 346-547 (IIPEHLIGKG…KEVEKRARYL (202 aa)). ATP-binding positions include 352–360 (IGKGAEADI) and Lys373. Residue Asp465 is the Proton acceptor; for kinase activity of the active site.

In the N-terminal section; belongs to the KAE1 / TsaD family. This sequence in the C-terminal section; belongs to the protein kinase superfamily. Tyr protein kinase family. BUD32 subfamily. As to quaternary structure, component of the KEOPS complex that consists of Kae1, Bud32, Cgi121 and Pcc1; the whole complex dimerizes. Fe(2+) serves as cofactor.

It localises to the cytoplasm. It carries out the reaction L-seryl-[protein] + ATP = O-phospho-L-seryl-[protein] + ADP + H(+). The catalysed reaction is L-threonyl-[protein] + ATP = O-phospho-L-threonyl-[protein] + ADP + H(+). The enzyme catalyses L-threonylcarbamoyladenylate + adenosine(37) in tRNA = N(6)-L-threonylcarbamoyladenosine(37) in tRNA + AMP + H(+). Required for the formation of a threonylcarbamoyl group on adenosine at position 37 (t(6)A37) in tRNAs that read codons beginning with adenine. Is a component of the KEOPS complex that is probably involved in the transfer of the threonylcarbamoyl moiety of threonylcarbamoyl-AMP (TC-AMP) to the N6 group of A37. The Kae1 domain likely plays a direct catalytic role in this reaction. The Bud32 domain probably displays kinase activity that regulates Kae1 function. This chain is Probable bifunctional tRNA threonylcarbamoyladenosine biosynthesis protein, found in Methanococcus maripaludis (strain C7 / ATCC BAA-1331).